The primary structure comprises 400 residues: tRNA-specific 2-thiouridylase MnmA (400 aa).

Residues 19–26 (AMSGGVDS) and Leu-45 each bind ATP. Cys-113 functions as the Nucleophile in the catalytic mechanism. Cys-113 and Cys-210 form a disulfide bridge. Gly-137 is a binding site for ATP. Residues 160–162 (RDQ) form an interaction with tRNA region. Cys-210 acts as the Cysteine persulfide intermediate in catalysis.

Belongs to the MnmA/TRMU family.

It is found in the cytoplasm. The enzyme catalyses S-sulfanyl-L-cysteinyl-[protein] + uridine(34) in tRNA + AH2 + ATP = 2-thiouridine(34) in tRNA + L-cysteinyl-[protein] + A + AMP + diphosphate + H(+). Catalyzes the 2-thiolation of uridine at the wobble position (U34) of tRNA, leading to the formation of s(2)U34. In Rhodopseudomonas palustris (strain BisA53), this protein is tRNA-specific 2-thiouridylase MnmA.